The sequence spans 484 residues: UDP-N-acetylmuramate--L-alanine ligase (484 aa).

Residue 125 to 131 (GTHGKTT) participates in ATP binding.

Belongs to the MurCDEF family.

The protein localises to the cytoplasm. It carries out the reaction UDP-N-acetyl-alpha-D-muramate + L-alanine + ATP = UDP-N-acetyl-alpha-D-muramoyl-L-alanine + ADP + phosphate + H(+). Its pathway is cell wall biogenesis; peptidoglycan biosynthesis. Functionally, cell wall formation. This is UDP-N-acetylmuramate--L-alanine ligase from Buchnera aphidicola subsp. Acyrthosiphon pisum (strain Tuc7).